Consider the following 663-residue polypeptide: Beta-galactosidase YesZ (663 aa).

Arginine 107 is a binding site for substrate. Cysteine 111 lines the Zn(2+) pocket. Asparagine 145 contacts substrate. Glutamate 146 (proton donor) is an active-site residue. Residues cysteine 154, cysteine 156, and cysteine 159 each contribute to the Zn(2+) site. The active-site Nucleophile is the glutamate 297. Residue 346–349 (EQPH) participates in substrate binding.

The protein belongs to the glycosyl hydrolase 42 family. In terms of assembly, homotrimer.

The enzyme catalyses Hydrolysis of terminal non-reducing beta-D-galactose residues in beta-D-galactosides.. In terms of biological role, may play a role in the degradation of rhamnogalacturonan derived from plant cell walls. The protein is Beta-galactosidase YesZ (yesZ) of Bacillus licheniformis (strain ATCC 14580 / DSM 13 / JCM 2505 / CCUG 7422 / NBRC 12200 / NCIMB 9375 / NCTC 10341 / NRRL NRS-1264 / Gibson 46).